We begin with the raw amino-acid sequence, 254 residues long: Isoprenyl transferase (254 aa).

Aspartate 12 is an active-site residue. A Mg(2+)-binding site is contributed by aspartate 12. Residues 13–16 (GNGR), tryptophan 17, arginine 25, histidine 29, and 57–59 (SSE) contribute to the substrate site. Catalysis depends on asparagine 60, which acts as the Proton acceptor. Residues tryptophan 61, arginine 63, arginine 180, and 186–188 (RLS) contribute to the substrate site. Residue glutamate 199 participates in Mg(2+) binding.

Belongs to the UPP synthase family. As to quaternary structure, homodimer. Requires Mg(2+) as cofactor.

Functionally, catalyzes the condensation of isopentenyl diphosphate (IPP) with allylic pyrophosphates generating different type of terpenoids. This Brucella abortus biovar 1 (strain 9-941) protein is Isoprenyl transferase.